The sequence spans 701 residues: Glycine--tRNA ligase beta subunit (701 aa).

The protein belongs to the class-II aminoacyl-tRNA synthetase family. Tetramer of two alpha and two beta subunits.

The protein resides in the cytoplasm. The enzyme catalyses tRNA(Gly) + glycine + ATP = glycyl-tRNA(Gly) + AMP + diphosphate. The chain is Glycine--tRNA ligase beta subunit from Helicobacter pylori (strain G27).